We begin with the raw amino-acid sequence, 632 residues long: Probable potassium transport system protein Kup 1 (632 aa).

A run of 12 helical transmembrane segments spans residues 17–37 (LFYL…TSPL), 60–80 (LISL…VLFL), 106–126 (TALL…DAMI), 144–164 (PSLA…LFVV), 175–195 (FFGP…ISHI), 210–230 (AVSF…AVFL), 254–274 (WFLL…ALVL), 292–312 (ALLP…QAVI), 344–364 (IFLP…VLSF), 370–390 (LATA…IMAF), 401–421 (LPVA…FLGA), and 426–446 (IHDG…VMWT).

It belongs to the HAK/KUP transporter (TC 2.A.72) family.

It is found in the cell inner membrane. It catalyses the reaction K(+)(in) + H(+)(in) = K(+)(out) + H(+)(out). Functionally, transport of potassium into the cell. Likely operates as a K(+):H(+) symporter. The polypeptide is Probable potassium transport system protein Kup 1 (Rhizobium etli (strain ATCC 51251 / DSM 11541 / JCM 21823 / NBRC 15573 / CFN 42)).